A 65-amino-acid polypeptide reads, in one-letter code: Conotoxin mr5.1b (65 aa).

Positions 1 to 19 (MRCVPVFVILLLLIASAPS) are cleaved as a signal peptide. Residues 20-48 (VDARLKTKDDMPLPSSHANIKRTLQMLRN) constitute a propeptide that is removed on maturation. The residue at position 60 (E60) is a 4-carboxyglutamate.

Belongs to the conotoxin T superfamily. Post-translationally, contains 2 disulfide bonds that can be either 'C1-C3, C2-C4' or 'C1-C4, C2-C3', since these disulfide connectivities have been observed for conotoxins with cysteine framework V (for examples, see AC P0DQQ7 and AC P81755). In terms of tissue distribution, expressed by the venom duct.

The protein localises to the secreted. The polypeptide is Conotoxin mr5.1b (Conus marmoreus (Marble cone)).